A 307-amino-acid polypeptide reads, in one-letter code: UDP-3-O-acyl-N-acetylglucosamine deacetylase (307 aa).

Zn(2+)-binding residues include His78, His241, and Asp245. The active-site Proton donor is His268.

Belongs to the LpxC family. It depends on Zn(2+) as a cofactor.

It carries out the reaction a UDP-3-O-[(3R)-3-hydroxyacyl]-N-acetyl-alpha-D-glucosamine + H2O = a UDP-3-O-[(3R)-3-hydroxyacyl]-alpha-D-glucosamine + acetate. It functions in the pathway glycolipid biosynthesis; lipid IV(A) biosynthesis; lipid IV(A) from (3R)-3-hydroxytetradecanoyl-[acyl-carrier-protein] and UDP-N-acetyl-alpha-D-glucosamine: step 2/6. Catalyzes the hydrolysis of UDP-3-O-myristoyl-N-acetylglucosamine to form UDP-3-O-myristoylglucosamine and acetate, the committed step in lipid A biosynthesis. The chain is UDP-3-O-acyl-N-acetylglucosamine deacetylase from Paracidovorax citrulli (strain AAC00-1) (Acidovorax citrulli).